The sequence spans 646 residues: Cartilage acidic protein 1 (646 aa).

An N-terminal signal peptide occupies residues Met-1–Gly-28. The stretch at Asp-47–Ala-89 is one FG-GAP 1; atypical repeat. The FG-GAP 2; atypical repeat unit spans residues Tyr-106 to Asp-148. The FG-GAP 3; atypical repeat unit spans residues Ala-284 to Asp-334. Residues Gly-396–Gly-438 form an FG-GAP 4; atypical repeat. Positions Asp-560–Cys-606 constitute an EGF-like domain. 3 cysteine pairs are disulfide-bonded: Cys-564–Cys-578, Cys-571–Cys-587, and Cys-593–Cys-606.

The protein resides in the secreted. Its subcellular location is the extracellular space. It localises to the extracellular matrix. The polypeptide is Cartilage acidic protein 1 (Crtac1) (Mus musculus (Mouse)).